The following is a 56-amino-acid chain: Large ribosomal subunit protein bL32c (56 aa).

Belongs to the bacterial ribosomal protein bL32 family.

It is found in the plastid. It localises to the chloroplast. The protein is Large ribosomal subunit protein bL32c of Tupiella akineta (Green alga).